Reading from the N-terminus, the 1293-residue chain is Receptor-type tyrosine-protein phosphatase C (1293 aa).

An N-terminal signal peptide occupies residues 1–25; sequence MTMGLWLKLLAFGFALLDTEVFVTG. The Extracellular portion of the chain corresponds to 26–566; that stretch reads QTPTPSDELS…RNESTNFNAK (541 aa). Residues 43 to 174 are disordered; it reads LPQSDPLPAR…STTDISSGAS (132 aa). Composition is skewed to polar residues over residues 53 to 72, 88 to 110, and 149 to 169; these read TTES…SETT, QPDS…QADN, and LARN…TTDI. The N-linked (GlcNAc...) asparagine glycan is linked to Asn-66. N-linked (GlcNAc...) asparagine glycosylation is found at Asn-152, Asn-163, Asn-209, Asn-213, Asn-220, Asn-255, Asn-260, Asn-292, Asn-313, Asn-324, Asn-349, Asn-418, Asn-429, Asn-459, and Asn-491. Fibronectin type-III domains follow at residues 376 to 472 and 473 to 568; these read IPET…TKAD and RPDK…AKAL. A helical membrane pass occupies residues 567 to 588; that stretch reads ALIIFLVFLIIVTSIALLVVLY. The Cytoplasmic portion of the chain corresponds to 589-1293; it reads KIYDLRKKRS…SASPAPTQSS (705 aa). Tyrosine-protein phosphatase domains lie at 642 to 901 and 933 to 1216; these read FLAE…LVEY and LEAE…IASI. Residue Tyr-672 is modified to Phosphotyrosine. Substrate is bound by residues Asp-810, 842–848, and Gln-886; that span reads CSAGVGR. The Phosphocysteine intermediate role is filled by Cys-842. Ser-964, Ser-983, Ser-986, Ser-990, Ser-993, Ser-994, and Ser-998 each carry phosphoserine. Residues 980 to 1003 are disordered; that stretch reads LEMSKESEPESDESSDDDSDSEET. Acidic residues predominate over residues 988–1001; sequence PESDESSDDDSDSE. Residue Cys-1157 is the Phosphocysteine intermediate of the active site. Ser-1229 carries the phosphoserine modification. The tract at residues 1240 to 1293 is disordered; sequence DGGKQDANCVRPDGPLNKAQEDSRGVGTPEPTNSAEEPEHAANGSASPAPTQSS. Thr-1267 carries the post-translational modification Phosphothreonine. The span at 1283 to 1293 shows a compositional bias: polar residues; that stretch reads GSASPAPTQSS. Ser-1286 carries the phosphoserine modification.

Belongs to the protein-tyrosine phosphatase family. Receptor class 1/6 subfamily. In terms of assembly, interacts with SKAP1. Interacts with DPP4; the interaction is enhanced in an interleukin-12-dependent manner in activated lymphocytes. Binds GANAB and PRKCSH. Interacts with CD53; this interaction stabilizes PTPRC on the membrane and is required for optimal phosphatase activity. Interacts with CLEC10A. In terms of processing, heavily N- and O-glycosylated.

Its subcellular location is the cell membrane. It is found in the membrane raft. It localises to the synapse. It carries out the reaction O-phospho-L-tyrosyl-[protein] + H2O = L-tyrosyl-[protein] + phosphate. Functionally, protein tyrosine-protein phosphatase required for T-cell activation through the antigen receptor. Acts as a positive regulator of T-cell coactivation upon binding to DPP4. The first PTPase domain has enzymatic activity, while the second one seems to affect the substrate specificity of the first one. Upon T-cell activation, recruits and dephosphorylates SKAP1 and FYN. Dephosphorylates LYN, and thereby modulates LYN activity. Interacts with CLEC10A at antigen presenting cell-T cell contact; CLEC10A on immature dendritic cells recognizes Tn antigen-carrying PTPRC/CD45 receptor on effector T cells and modulates T cell activation threshold to limit autoreactivity. In Mus musculus (Mouse), this protein is Receptor-type tyrosine-protein phosphatase C.